The following is a 192-amino-acid chain: Cytidylate kinase (192 aa).

G7–T15 provides a ligand contact to ATP.

Belongs to the cytidylate kinase family. Type 2 subfamily.

It localises to the cytoplasm. The catalysed reaction is CMP + ATP = CDP + ADP. The enzyme catalyses dCMP + ATP = dCDP + ADP. This is Cytidylate kinase from Halorubrum lacusprofundi (strain ATCC 49239 / DSM 5036 / JCM 8891 / ACAM 34).